Consider the following 100-residue polypeptide: Large ribosomal subunit protein uL23 (100 aa).

The protein belongs to the universal ribosomal protein uL23 family. Part of the 50S ribosomal subunit. Contacts protein L29, and trigger factor when it is bound to the ribosome.

Its function is as follows. One of the early assembly proteins it binds 23S rRNA. One of the proteins that surrounds the polypeptide exit tunnel on the outside of the ribosome. Forms the main docking site for trigger factor binding to the ribosome. This chain is Large ribosomal subunit protein uL23, found in Prochlorococcus marinus (strain MIT 9215).